Reading from the N-terminus, the 790-residue chain is Phenylalanine--tRNA ligase beta subunit (790 aa).

In terms of domain architecture, tRNA-binding spans 39–154; that stretch reads PDSLNTVVTG…ADTPLGESAC (116 aa). One can recognise a B5 domain in the interval 404–483; that stretch reads FSPLSLSVRP…FVQKTQKILP (80 aa). Positions 457, 463, 466, and 467 each coordinate Mg(2+). One can recognise an FDX-ACB domain in the interval 694–790; that stretch reads PIYPASSRDI…KLANIGQGNS (97 aa).

This sequence belongs to the phenylalanyl-tRNA synthetase beta subunit family. Type 1 subfamily. In terms of assembly, tetramer of two alpha and two beta subunits. Requires Mg(2+) as cofactor.

The protein localises to the cytoplasm. The catalysed reaction is tRNA(Phe) + L-phenylalanine + ATP = L-phenylalanyl-tRNA(Phe) + AMP + diphosphate + H(+). In Chlamydia trachomatis serovar D (strain ATCC VR-885 / DSM 19411 / UW-3/Cx), this protein is Phenylalanine--tRNA ligase beta subunit (pheT).